The primary structure comprises 492 residues: 2,3-bisphosphoglycerate-independent phosphoglycerate mutase (492 aa).

Mn(2+) is bound by residues Asp11 and Ser61. Catalysis depends on Ser61, which acts as the Phosphoserine intermediate. Substrate-binding positions include His118, 147–148 (RD), Arg178, Arg184, 248–251 (RNDR), and Lys320. Mn(2+) is bound by residues Asp386, His390, Asp427, His428, and His445.

This sequence belongs to the BPG-independent phosphoglycerate mutase family. In terms of assembly, monomer. The cofactor is Mn(2+).

It carries out the reaction (2R)-2-phosphoglycerate = (2R)-3-phosphoglycerate. The protein operates within carbohydrate degradation; glycolysis; pyruvate from D-glyceraldehyde 3-phosphate: step 3/5. Functionally, catalyzes the interconversion of 2-phosphoglycerate and 3-phosphoglycerate. The chain is 2,3-bisphosphoglycerate-independent phosphoglycerate mutase from Campylobacter jejuni (strain RM1221).